Reading from the N-terminus, the 186-residue chain is UPF0461 protein C5orf24 homolog (186 aa).

Polar residues predominate over residues 60–69 (NETHLQTSTS). A disordered region spans residues 60 to 140 (NETHLQTSTS…AAGYKVSPGR (81 aa)). Residues 78 to 92 (LKKKKNLGRSGKRGR) show a composition bias toward basic residues. Positions 94–107 (SGTTKSAGYRTSTG) are enriched in polar residues.

This sequence belongs to the UPF0461 family.

This Xenopus tropicalis (Western clawed frog) protein is UPF0461 protein C5orf24 homolog.